The sequence spans 259 residues: Polycomb group RING finger protein 1 (259 aa).

Ala2 carries the N-acetylalanine modification. Position 3 is a phosphoserine (Ser3). Lys24 is covalently cross-linked (Glycyl lysine isopeptide (Lys-Gly) (interchain with G-Cter in SUMO2)). The segment at 47-86 adopts an RING-type zinc-finger fold; that stretch reads CCLCAGYFVDATTITECLHTFCKSCIVKYLQTSKYCPMCN. The interval 86-247 is necessary for repressor activity; the sequence is NIKIHETQPL…LSRWFGKPSP (162 aa). Residue Lys88 forms a Glycyl lysine isopeptide (Lys-Gly) (interchain with G-Cter in SUMO2) linkage. The tract at residues 150–255 is required for the interaction with the KDM2B-SKP1 heterodimeric complex; sequence LPFSSFDHSK…SPLLLQYSVK (106 aa). Residues 167–255 form an RING-finger and WD40-associated ubiquitin-like domain (RAWUL); sufficient for interaction with BCOR and BCORL1 region; the sequence is EQLSLCLERL…SPLLLQYSVK (89 aa).

Interacts with BCORL1, forming heterodimers. The PCGF1-BCORL1 heterodimeric complex interacts with the KDM2B-SKP1 heterodimeric complex to form a homotetrameric polycomb repression complex 1 (PRC1.1). Component of the repressive BCOR complex containing a Polycomb group subcomplex at least composed of RYBP, RING1 and RNF2/RING2. Specifically interacts with BCOR, RING1 and RNF2/RING2. Component of a PRC1-like complex. Interacts with CBX6, CBX7 and CBX8. Interacts with DPPA4, NANOG, POU5F1 and RYBP.

It is found in the nucleus. In terms of biological role, component of the Polycomb group (PcG) multiprotein BCOR complex, a complex required to maintain the transcriptionally repressive state of some genes, such as BCL6 and the cyclin-dependent kinase inhibitor, CDKN1A. Transcriptional repressor that may be targeted to the DNA by BCL6; this transcription repressor activity may be related to PKC signaling pathway. Represses CDKN1A expression by binding to its promoter, and this repression is dependent on the retinoic acid response element (RARE element). Promotes cell cycle progression and enhances cell proliferation as well. May have a positive role in tumor cell growth by down-regulating CDKN1A. Component of a Polycomb group (PcG) multiprotein PRC1-like complex, a complex class required to maintain the transcriptionally repressive state of many genes, including Hox genes, throughout development. PcG PRC1 complex acts via chromatin remodeling and modification of histones; it mediates monoubiquitination of histone H2A 'Lys-119', rendering chromatin heritably changed in its expressibility. Within the PRC1-like complex, regulates RNF2 ubiquitin ligase activity. Regulates the expression of DPPA4 and NANOG in the NT2 embryonic carcinoma cells. This Mus musculus (Mouse) protein is Polycomb group RING finger protein 1 (Pcgf1).